Consider the following 205-residue polypeptide: Large ribosomal subunit protein uL3 (205 aa).

The protein belongs to the universal ribosomal protein uL3 family. As to quaternary structure, part of the 50S ribosomal subunit. Forms a cluster with proteins L14 and L19.

In terms of biological role, one of the primary rRNA binding proteins, it binds directly near the 3'-end of the 23S rRNA, where it nucleates assembly of the 50S subunit. The chain is Large ribosomal subunit protein uL3 from Parabacteroides distasonis (strain ATCC 8503 / DSM 20701 / CIP 104284 / JCM 5825 / NCTC 11152).